Reading from the N-terminus, the 446-residue chain is Xylose isomerase 2 (446 aa).

Active-site residues include histidine 109 and aspartate 112. Mg(2+) contacts are provided by glutamate 240, glutamate 276, histidine 279, aspartate 304, aspartate 315, aspartate 317, and aspartate 347.

The protein belongs to the xylose isomerase family. As to quaternary structure, homotetramer. Mg(2+) serves as cofactor.

The protein localises to the cytoplasm. The catalysed reaction is alpha-D-xylose = alpha-D-xylulofuranose. In Xanthomonas campestris pv. campestris (strain 8004), this protein is Xylose isomerase 2.